The sequence spans 161 residues: UPF0178 protein BOV_1904 (161 aa).

This sequence belongs to the UPF0178 family.

In Brucella ovis (strain ATCC 25840 / 63/290 / NCTC 10512), this protein is UPF0178 protein BOV_1904.